The sequence spans 505 residues: MSEQNAQGADEVVDLNNEMKARREKLAALREQGIPFPNDFRRDRTSDQLHAEFDAKEAEELEALNIEVSVAGRMMTRRIMGKASFVTLQDVGGRIQLYVARDDLPEGVYNEQFKKWDLGDILGAKGKLFKTKTGELSIHCSELRLLTKALRPLPDKFHGLQDQEARYRQRYLDLISNDESRNTFKTRSKILAGIRQFMVARGFMEVETPMMQVIPGGASARPFITHHNALDLDMYLRIAPELYLKRLVVGGFERVFEINRNFRNEGISVRHNPEFTMMELYMAYADYKDLIELTESLFRTLAQDVLGNTQVPYGDEVFDFGKPFEKLTMREAIKKYRPETDMADLDNFDSAKAIAESIGIHVEKSWGLGRIVTEIFDEVAEAHLIQPTFITEYPAEVSPLARRNDVNPEITDRFEFFIGGREIGNGFSELNDAEDQAQRFQDQVNAKAAGDDEAMFYDEDYVTALEHGLPPTAGLGIGIDRMVMLFTNSHTIRDVILFPAMRPVK.

2 residues coordinate Mg(2+): Glu-415 and Glu-422.

The protein belongs to the class-II aminoacyl-tRNA synthetase family. In terms of assembly, homodimer. It depends on Mg(2+) as a cofactor.

It localises to the cytoplasm. The catalysed reaction is tRNA(Lys) + L-lysine + ATP = L-lysyl-tRNA(Lys) + AMP + diphosphate. This chain is Lysine--tRNA ligase, found in Salmonella arizonae (strain ATCC BAA-731 / CDC346-86 / RSK2980).